The sequence spans 128 residues: Cystatin-2 (128 aa).

Residues 1–19 (MSSFKVAVLLIAVYGASQG) form the signal peptide. Residues 29–116 (QDPTEARFLE…CVAVIYHVPW (88 aa)) enclose the Cystatin domain. 2 disulfide bridges follow: C84/C96 and C107/C127.

It belongs to the cystatin family. As to expression, widely expressed. Detected in salivary glands (at protein level), gut (at protein level), ovaries, and Malpighian tubules.

It localises to the secreted. Its function is as follows. Inhibitor of cysteine proteinases with broad specificity for mammalian cathepsins, including endopeptidases (cathepsins L and S) and exopeptidases (cathepsins B, C and H). Also inhibits endogenous cathepsin B-like and cathepsin C-like proteinases. Does not inhibit human legumain. May mimic specific host-derived cystatin(s) to interfere with its/their function in controlling cathepsin-mediated proteolysis. Affects the function of antigen-presenting mouse dendritic cells by reducing the production of the pro-inflammatory cytokines TNF and interleukin-12, and proliferation of antigen-specific CD4+ T-cells, suggesting it may suppress the host adaptive immune response. It is noteworthy that immunization of mice with this protein reduces O.moubata survival in infestation experiments. This Ornithodoros moubata (Soft tick) protein is Cystatin-2.